A 441-amino-acid chain; its full sequence is MFS-type transporter (441 aa).

Residues 1–47 (MPPQQEQDTDSDAIRSYNEESKSETPGCIPDAMLSSDETSNDVASDI) are disordered. 10 helical membrane-spanning segments follow: residues 61-81 (TLCG…FGIF), 95-115 (DISW…AFVG), 125-145 (LVLS…SLST), 150-170 (LILS…TPAV), 183-203 (LAIG…NSMA), 212-232 (FGWT…FVVV), 259-279 (FFTI…YYIA), 289-309 (TLTY…GVFG), 323-343 (LELL…WIAV), and 351-371 (VWTV…PAGI). N-linked (GlcNAc...) asparagine glycosylation is present at Asn388. 2 helical membrane-spanning segments follow: residues 389–409 (FTVI…IITA) and 415–435 (YGAQ…IVAA).

This sequence belongs to the major facilitator superfamily. Monocarboxylate porter (TC 2.A.1.13) family.

It is found in the membrane. Functionally, MFS-type transporter; part of the gene cluster that mediates the biosynthesis of butenolide, a mycotoxin that shows antibiotic activity but does not seem to play a major role in the spread of head blight in wheat. This chain is MFS-type transporter, found in Gibberella zeae (strain ATCC MYA-4620 / CBS 123657 / FGSC 9075 / NRRL 31084 / PH-1) (Wheat head blight fungus).